We begin with the raw amino-acid sequence, 142 residues long: Large ribosomal subunit protein bL19 (142 aa).

The protein belongs to the bacterial ribosomal protein bL19 family.

Functionally, this protein is located at the 30S-50S ribosomal subunit interface and may play a role in the structure and function of the aminoacyl-tRNA binding site. This Psychrobacter cryohalolentis (strain ATCC BAA-1226 / DSM 17306 / VKM B-2378 / K5) protein is Large ribosomal subunit protein bL19.